A 908-amino-acid polypeptide reads, in one-letter code: Isoleucine--tRNA ligase (908 aa).

The short motif at 59–69 (PYANGDLHIGH) is the 'HIGH' region element. Glu-554 contributes to the L-isoleucyl-5'-AMP binding site. The 'KMSKS' region signature appears at 595-599 (KMSKS). Lys-598 contacts ATP. The Zn(2+) site is built by Cys-882, Cys-885, Cys-898, and Cys-901.

It belongs to the class-I aminoacyl-tRNA synthetase family. IleS type 1 subfamily. In terms of assembly, monomer. Zn(2+) serves as cofactor.

The protein localises to the cytoplasm. It catalyses the reaction tRNA(Ile) + L-isoleucine + ATP = L-isoleucyl-tRNA(Ile) + AMP + diphosphate. Catalyzes the attachment of isoleucine to tRNA(Ile). As IleRS can inadvertently accommodate and process structurally similar amino acids such as valine, to avoid such errors it has two additional distinct tRNA(Ile)-dependent editing activities. One activity is designated as 'pretransfer' editing and involves the hydrolysis of activated Val-AMP. The other activity is designated 'posttransfer' editing and involves deacylation of mischarged Val-tRNA(Ile). The polypeptide is Isoleucine--tRNA ligase (Mesoplasma florum (strain ATCC 33453 / NBRC 100688 / NCTC 11704 / L1) (Acholeplasma florum)).